Here is a 271-residue protein sequence, read N- to C-terminus: Cytosolic Fe-S cluster assembly factor NUBP2 (271 aa).

M1 is modified (N-acetylmethionine). 22–29 is an ATP binding site; that stretch reads GKGGVGKS. [4Fe-4S] cluster-binding residues include C196 and C199.

This sequence belongs to the Mrp/NBP35 ATP-binding proteins family. NUBP2/CFD1 subfamily. As to quaternary structure, heterotetramer of 2 NUBP1 and 2 NUBP2 chains. Interacts with KIFC1. Interacts with NUBP1. [4Fe-4S] cluster serves as cofactor. Widely expressed with highest expression in skeletal muscle.

The protein localises to the nucleus. The protein resides in the cytoplasm. It is found in the cytoskeleton. It localises to the microtubule organizing center. Its subcellular location is the centrosome. The protein localises to the cilium axoneme. The protein resides in the centriole. In terms of biological role, component of the cytosolic iron-sulfur (Fe/S) protein assembly (CIA) machinery. Required for maturation of extramitochondrial Fe-S proteins. The NUBP1-NUBP2 heterotetramer forms a Fe-S scaffold complex, mediating the de novo assembly of an Fe-S cluster and its transfer to target apoproteins. Negatively regulates cilium formation and structure. The polypeptide is Cytosolic Fe-S cluster assembly factor NUBP2 (Homo sapiens (Human)).